Consider the following 88-residue polypeptide: Small ribosomal subunit protein uS15 (88 aa).

Belongs to the universal ribosomal protein uS15 family. As to quaternary structure, part of the 30S ribosomal subunit. Forms a bridge to the 50S subunit in the 70S ribosome, contacting the 23S rRNA.

Its function is as follows. One of the primary rRNA binding proteins, it binds directly to 16S rRNA where it helps nucleate assembly of the platform of the 30S subunit by binding and bridging several RNA helices of the 16S rRNA. Forms an intersubunit bridge (bridge B4) with the 23S rRNA of the 50S subunit in the ribosome. In Acidobacterium capsulatum (strain ATCC 51196 / DSM 11244 / BCRC 80197 / JCM 7670 / NBRC 15755 / NCIMB 13165 / 161), this protein is Small ribosomal subunit protein uS15.